Reading from the N-terminus, the 164-residue chain is Protein SprT (164 aa).

The 146-residue stretch at 12 to 157 (CFLQAESFFK…CRRCRQTLVF (146 aa)) folds into the SprT-like domain. Histidine 69 contributes to the Zn(2+) binding site. Glutamate 70 is an active-site residue. Residue histidine 73 participates in Zn(2+) binding.

The protein belongs to the SprT family. The cofactor is Zn(2+).

The protein resides in the cytoplasm. This is Protein SprT from Pseudomonas fluorescens (strain SBW25).